A 458-amino-acid polypeptide reads, in one-letter code: Argininosuccinate lyase (458 aa).

Belongs to the lyase 1 family. Argininosuccinate lyase subfamily.

Its subcellular location is the cytoplasm. It catalyses the reaction 2-(N(omega)-L-arginino)succinate = fumarate + L-arginine. It functions in the pathway amino-acid biosynthesis; L-arginine biosynthesis; L-arginine from L-ornithine and carbamoyl phosphate: step 3/3. In Actinobacillus pleuropneumoniae serotype 3 (strain JL03), this protein is Argininosuccinate lyase.